The chain runs to 244 residues: Phosphoadenosine 5'-phosphosulfate reductase (244 aa).

Cys239 acts as the Nucleophile; cysteine thiosulfonate intermediate in catalysis.

It belongs to the PAPS reductase family. CysH subfamily.

The protein resides in the cytoplasm. The catalysed reaction is [thioredoxin]-disulfide + sulfite + adenosine 3',5'-bisphosphate + 2 H(+) = [thioredoxin]-dithiol + 3'-phosphoadenylyl sulfate. Its pathway is sulfur metabolism; hydrogen sulfide biosynthesis; sulfite from sulfate: step 3/3. Functionally, catalyzes the formation of sulfite from phosphoadenosine 5'-phosphosulfate (PAPS) using thioredoxin as an electron donor. This chain is Phosphoadenosine 5'-phosphosulfate reductase, found in Escherichia coli O6:K15:H31 (strain 536 / UPEC).